A 401-amino-acid polypeptide reads, in one-letter code: MIAVLGIKRNTPIEIREKLTIKVNKHDEYLDKLLKYLEGVVILATCNRTEIYFNVSSINEELLKKIFEIFNWNYSYRKYIFISEDKKACKHLFEVTCGFHSKILGEDQILGQVKTSYFKSLNAKALNLELQRLFQYAITCGKKFKSQSRLFEIPVSSASIVVNESINKDCKKFMVLGYGDVGRLTMKYLLAHNINEVYLAVRNKKIKDEIMDKRVNVIDFEEKNKYINDMDCVISCTSAPHIVIKKQDINNIGSNIIIYDLAVPRDVDDDINDIDRAQVYNIDNISHINDGNKKMRFDKMDSNKFILEKYLNEYYEWKRLRSIAPFIEELKVTSKEIYNKRITTFKNKCTDKDDVDLANRMIKSTSDYYMNRAIDIMKEETLKGSEEECLRIIKSIFMTKK.

Substrate contacts are provided by residues 45–48, Ser101, 106–108, and Gln112; these read TCNR and EDQ. The active-site Nucleophile is Cys46. NADP(+) is bound at residue 177-182; that stretch reads GYGDVG.

Belongs to the glutamyl-tRNA reductase family. As to quaternary structure, homodimer.

The catalysed reaction is (S)-4-amino-5-oxopentanoate + tRNA(Glu) + NADP(+) = L-glutamyl-tRNA(Glu) + NADPH + H(+). The protein operates within porphyrin-containing compound metabolism; protoporphyrin-IX biosynthesis; 5-aminolevulinate from L-glutamyl-tRNA(Glu): step 1/2. Catalyzes the NADPH-dependent reduction of glutamyl-tRNA(Glu) to glutamate 1-semialdehyde (GSA). In Clostridium botulinum (strain Eklund 17B / Type B), this protein is Glutamyl-tRNA reductase.